Here is a 489-residue protein sequence, read N- to C-terminus: Glucose-6-phosphate isomerase (489 aa).

Catalysis depends on E309, which acts as the Proton donor. Catalysis depends on residues H340 and K459.

The protein belongs to the GPI family.

The protein localises to the cytoplasm. The catalysed reaction is alpha-D-glucose 6-phosphate = beta-D-fructose 6-phosphate. The protein operates within carbohydrate biosynthesis; gluconeogenesis. It functions in the pathway carbohydrate degradation; glycolysis; D-glyceraldehyde 3-phosphate and glycerone phosphate from D-glucose: step 2/4. Catalyzes the reversible isomerization of glucose-6-phosphate to fructose-6-phosphate. In Idiomarina loihiensis (strain ATCC BAA-735 / DSM 15497 / L2-TR), this protein is Glucose-6-phosphate isomerase.